The primary structure comprises 375 residues: Actin-binding Rho-activating protein (375 aa).

Basic and acidic residues-rich tracts occupy residues 1-11 (MAPGEREREAG) and 79-99 (KPDRDGEGQHSEEATEVSHIK). Disordered stretches follow at residues 1-20 (MAPGEREREAGPAKSALRKV) and 38-99 (NENS…SHIK). Serine 150 and serine 182 each carry phosphoserine. A compositionally biased stretch (basic and acidic residues) spans 173 to 182 (QEEPTWKSDS). A disordered region spans residues 173-204 (QEEPTWKSDSVDTEDSGYGGDMEERPEQDAAP). Actin-binding regions lie at residues 193-293 (DMEE…AERA) and 294-375 (KRAE…TLLE). 2 interaction with actin regions span residues 234 to 279 (SQVD…GDEG) and 346 to 375 (MRARKHGLVHFEGEMLWQGRDDHVVITLLE).

Binds F-actin and ABLIM1, ABLIM2 and ABLIM3. Interaction with ABLIM2 and ABLIM3 enhances activity. As to expression, expressed specifically in heart and skeletal muscle.

Its subcellular location is the cytoplasm. The protein localises to the myofibril. The protein resides in the sarcomere. It is found in the cytoskeleton. Acts as an activator of serum response factor (SRF)-dependent transcription possibly by inducing nuclear translocation of MKL1 or MKL2 and through a mechanism requiring Rho-actin signaling. In Mus musculus (Mouse), this protein is Actin-binding Rho-activating protein.